We begin with the raw amino-acid sequence, 504 residues long: Probable GTP-binding protein OBGC2 (504 aa).

A compositionally biased stretch (basic and acidic residues) spans 24 to 39; that stretch reads AHRDARPALRLPELHA. 2 disordered regions span residues 24 to 46 and 93 to 122; these read AHRD…RRNN and VLAM…GVKK. The region spanning 73-276 is the Obg domain; it reads HKYFDHAVVT…VSLELILRVV (204 aa). Positions 107 to 122 are enriched in basic residues; it reads SPRRRSDKGKRSGVKK. The OBG-type G domain maps to 277 to 494; sequence ADVGLVGLPN…MLKEIRAALR (218 aa). Residues 283–290 and 337–341 contribute to the GTP site; these read GLPNAGKS and DLPGL. The span at 436–452 shows a compositional bias: polar residues; sequence SEDSLNGNTGEHNTSSE. Positions 436–463 are disordered; it reads SEDSLNGNTGEHNTSSETKVEGGEKELR. Over residues 453–463 the composition is skewed to basic and acidic residues; sequence TKVEGGEKELR.

Belongs to the TRAFAC class OBG-HflX-like GTPase superfamily. OBG GTPase family.

In terms of biological role, may bind GTP and have GTPase activity. This chain is Probable GTP-binding protein OBGC2, found in Oryza sativa subsp. japonica (Rice).